A 265-amino-acid polypeptide reads, in one-letter code: uncharacterized protein (265 aa).

Residues 3-23 traverse the membrane as a helical; Signal-anchor for type II membrane protein segment; it reads KKTWVYIIIAIIIILLLVWYF. 2 N-linked (GlcNAc...) asparagine; by host glycosylation sites follow: Asn37 and Asn125. Residues 37–94 are a coiled coil; sequence NQTYNMLQQQISSLNQQILFLKQQISNLHVPAPTSTVNSLRQTVSDINQQVSTINNQI. Residues 158 to 257 adopt a coiled-coil conformation; the sequence is NVADNELNVL…KNSLGSAVRN (100 aa).

The protein resides in the host membrane. Its subcellular location is the virion. This is an uncharacterized protein from Acanthamoeba polyphaga (Amoeba).